Consider the following 805-residue polypeptide: Sucrose synthase 1 (805 aa).

Residues 274–751 are GT-B glycosyltransferase; that stretch reads MVFNVVILSP…GLQRIYEKYT (478 aa).

This sequence belongs to the glycosyltransferase 1 family. Plant sucrose synthase subfamily.

It catalyses the reaction an NDP-alpha-D-glucose + D-fructose = a ribonucleoside 5'-diphosphate + sucrose + H(+). Functionally, sucrose-cleaving enzyme that provides UDP-glucose and fructose for various metabolic pathways. The polypeptide is Sucrose synthase 1 (Tulipa gesneriana (Garden tulip)).